A 446-amino-acid chain; its full sequence is Probable glycine dehydrogenase (decarboxylating) subunit 1 (446 aa).

It belongs to the GcvP family. N-terminal subunit subfamily. In terms of assembly, the glycine cleavage system is composed of four proteins: P, T, L and H. In this organism, the P 'protein' is a heterodimer of two subunits.

It catalyses the reaction N(6)-[(R)-lipoyl]-L-lysyl-[glycine-cleavage complex H protein] + glycine + H(+) = N(6)-[(R)-S(8)-aminomethyldihydrolipoyl]-L-lysyl-[glycine-cleavage complex H protein] + CO2. The glycine cleavage system catalyzes the degradation of glycine. The P protein binds the alpha-amino group of glycine through its pyridoxal phosphate cofactor; CO(2) is released and the remaining methylamine moiety is then transferred to the lipoamide cofactor of the H protein. The sequence is that of Probable glycine dehydrogenase (decarboxylating) subunit 1 from Xanthobacter autotrophicus (strain ATCC BAA-1158 / Py2).